The chain runs to 64 residues: uncharacterized protein (64 aa).

Residues 1-64 (MNNPNIVPPH…QNQPPQRPQY (64 aa)) form a disordered region. Over residues 8-32 (PPHFNQHQQQNHNQNQPPHHMNNPN) the composition is skewed to low complexity.

This is an uncharacterized protein from Dictyostelium discoideum (Social amoeba).